A 397-amino-acid polypeptide reads, in one-letter code: L-asparaginase-like protein CG4372 (397 aa).

The first 22 residues, 1–22 (MLAQSCCLRLLILLLLFTTIGS), serve as a signal peptide directing secretion. 3 disulfide bridges follow: Cys90–Cys95, Cys189–Cys205, and Cys344–Cys371.

It belongs to the Ntn-hydrolase family.

This is L-asparaginase-like protein CG4372 from Drosophila melanogaster (Fruit fly).